Here is a 338-residue protein sequence, read N- to C-terminus: uncharacterized protein (338 aa).

The first 29 residues, 1–29 (MIKQLCKNITICTLALSTTFTVLPATSFA), serve as a signal peptide directing secretion.

This sequence belongs to the aerolysin family.

This is an uncharacterized protein from Staphylococcus aureus (strain USA300).